The following is a 575-amino-acid chain: Arginine--tRNA ligase (575 aa).

A 'HIGH' region motif is present at residues 122-132; sequence PNVAKEMHVGH.

Belongs to the class-I aminoacyl-tRNA synthetase family. Monomer.

The protein resides in the cytoplasm. It carries out the reaction tRNA(Arg) + L-arginine + ATP = L-arginyl-tRNA(Arg) + AMP + diphosphate. The polypeptide is Arginine--tRNA ligase (Actinobacillus succinogenes (strain ATCC 55618 / DSM 22257 / CCUG 43843 / 130Z)).